The sequence spans 291 residues: Glycine--tRNA ligase alpha subunit (291 aa).

The protein belongs to the class-II aminoacyl-tRNA synthetase family. Tetramer of two alpha and two beta subunits.

The protein localises to the cytoplasm. It carries out the reaction tRNA(Gly) + glycine + ATP = glycyl-tRNA(Gly) + AMP + diphosphate. The chain is Glycine--tRNA ligase alpha subunit from Microcystis aeruginosa (strain NIES-843 / IAM M-2473).